The primary structure comprises 243 residues: 2-C-methyl-D-erythritol 4-phosphate cytidylyltransferase (243 aa).

This sequence belongs to the IspD/TarI cytidylyltransferase family. IspD subfamily.

The catalysed reaction is 2-C-methyl-D-erythritol 4-phosphate + CTP + H(+) = 4-CDP-2-C-methyl-D-erythritol + diphosphate. Its pathway is isoprenoid biosynthesis; isopentenyl diphosphate biosynthesis via DXP pathway; isopentenyl diphosphate from 1-deoxy-D-xylulose 5-phosphate: step 2/6. Catalyzes the formation of 4-diphosphocytidyl-2-C-methyl-D-erythritol from CTP and 2-C-methyl-D-erythritol 4-phosphate (MEP). The chain is 2-C-methyl-D-erythritol 4-phosphate cytidylyltransferase from Chlorobium phaeovibrioides (strain DSM 265 / 1930) (Prosthecochloris vibrioformis (strain DSM 265)).